The sequence spans 429 residues: Histidine--tRNA ligase (429 aa).

It belongs to the class-II aminoacyl-tRNA synthetase family. Homodimer.

It localises to the cytoplasm. It catalyses the reaction tRNA(His) + L-histidine + ATP = L-histidyl-tRNA(His) + AMP + diphosphate + H(+). In Pseudomonas putida (strain GB-1), this protein is Histidine--tRNA ligase.